The chain runs to 215 residues: MSTTPVRAAPEVLLLDYGAGNVRSAARALERAGMTVRVTDNAADVPHAPALVVPGQGHFRQVMEAFEHGGFHGPVLDAARAGVPLLGICVGMQLLFDGSEEAPGVPGLGLIAGQVRKFAPAPERKVPQMGWNALEARGDSPLLRGLGPDAYAYFVHSYYVPVDVPVTDGAVTDYGVPFWSALSRGNLHAAQFHPEKSGAVGLALLANFRRELAPA.

The Glutamine amidotransferase type-1 domain occupies 11–215 (EVLLLDYGAG…ANFRRELAPA (205 aa)). Cys-89 serves as the catalytic Nucleophile. Active-site residues include His-193 and Glu-195.

In terms of assembly, heterodimer of HisH and HisF.

It localises to the cytoplasm. It carries out the reaction 5-[(5-phospho-1-deoxy-D-ribulos-1-ylimino)methylamino]-1-(5-phospho-beta-D-ribosyl)imidazole-4-carboxamide + L-glutamine = D-erythro-1-(imidazol-4-yl)glycerol 3-phosphate + 5-amino-1-(5-phospho-beta-D-ribosyl)imidazole-4-carboxamide + L-glutamate + H(+). The enzyme catalyses L-glutamine + H2O = L-glutamate + NH4(+). Its pathway is amino-acid biosynthesis; L-histidine biosynthesis; L-histidine from 5-phospho-alpha-D-ribose 1-diphosphate: step 5/9. IGPS catalyzes the conversion of PRFAR and glutamine to IGP, AICAR and glutamate. The HisH subunit catalyzes the hydrolysis of glutamine to glutamate and ammonia as part of the synthesis of IGP and AICAR. The resulting ammonia molecule is channeled to the active site of HisF. In Deinococcus radiodurans (strain ATCC 13939 / DSM 20539 / JCM 16871 / CCUG 27074 / LMG 4051 / NBRC 15346 / NCIMB 9279 / VKM B-1422 / R1), this protein is Imidazole glycerol phosphate synthase subunit HisH (hisH).